A 627-amino-acid chain; its full sequence is Sodium- and chloride-dependent GABA transporter 3 (627 aa).

The interval 1 to 36 (MTAEQALPLGNGKAAEEARGSEALGGGGGGAAGTRE) is disordered. Residues 1 to 53 (MTAEQALPLGNGKAAEEARGSEALGGGGGGAAGTREARDKAVHERGHWNNKVE) are Cytoplasmic-facing. S21 carries the phosphoserine modification. The segment covering 23 to 32 (ALGGGGGGAA) has biased composition (gly residues). 3 helical membrane passes run 54 to 74 (FVLS…FPYL), 82 to 101 (AFLI…VFFL), and 126 to 146 (GIGY…IIIL). Over 147–220 (AWAIFYLSNC…DGIEHIGNLR (74 aa)) the chain is Extracellular. 3 N-linked (GlcNAc...) asparagine glycosylation sites follow: N182, N185, and N193. The next 9 helical transmembrane spans lie at 221–239 (WELA…FCIW), 248–265 (VVYV…ILLI), 301–318 (IFFS…LGSY), 330–351 (IMLC…FSVL), 384–403 (MPLS…FLGL), 433–451 (LLIL…VMLT), 468–488 (GMCL…VYGS), 509–528 (WCWK…FFLV), and 548–566 (IGWL…WIFI). The Cytoplasmic portion of the chain corresponds to 567–627 (KLWKTEGTLP…SAITEKETHF (61 aa)).

This sequence belongs to the sodium:neurotransmitter symporter (SNF) (TC 2.A.22) family. SLC6A11 subfamily. Brain and retina. Expressed predominantly within neurons. Expressed in the hippocampus (at protein level).

The protein localises to the cell membrane. It carries out the reaction 4-aminobutanoate(out) + chloride(out) + 2 Na(+)(out) = 4-aminobutanoate(in) + chloride(in) + 2 Na(+)(in). The enzyme catalyses taurine(out) + chloride(out) + 2 Na(+)(out) = taurine(in) + chloride(in) + 2 Na(+)(in). It catalyses the reaction beta-alanine(out) + chloride(out) + 2 Na(+)(out) = beta-alanine(in) + chloride(in) + 2 Na(+)(in). The catalysed reaction is hypotaurine(out) + chloride(out) + 2 Na(+)(out) = hypotaurine(in) + chloride(in) + 2 Na(+)(in). With respect to regulation, GABA transport is inhibited by beta-alanine. Mediates sodium- and chloride-dependent transport of gamma-aminobutyric acid (GABA). Can also mediate transport of beta-alanine and to a lower extent that of taurine and hypotaurine. This chain is Sodium- and chloride-dependent GABA transporter 3 (Slc6a11), found in Rattus norvegicus (Rat).